The chain runs to 505 residues: Neuronal acetylcholine receptor subunit alpha-3 (505 aa).

Positions Met1 to Ala31 are cleaved as a signal peptide. Residues Ser32–Ile250 are Extracellular-facing. Asn55 and Asn172 each carry an N-linked (GlcNAc...) asparagine glycan. 2 disulfide bridges follow: Cys159–Cys173 and Cys223–Cys224. The chain crosses the membrane as a helical span at residues Pro251–Pro266. The Cytoplasmic segment spans residues Ser267–Asp268. The helical transmembrane segment at Cys269–Val285 threads the bilayer. Residues Phe286–Tyr307 lie on the Extracellular side of the membrane. A helical transmembrane segment spans residues Leu308–Leu326. Topologically, residues Asn327–Val474 are cytoplasmic. 2 positions are modified to phosphoserine: Ser413 and Ser416. The helical transmembrane segment at Ile475 to Gly493 threads the bilayer. Over Leu494 to Ala505 the chain is Extracellular.

Belongs to the ligand-gated ion channel (TC 1.A.9) family. Acetylcholine receptor (TC 1.A.9.1) subfamily. Alpha-3/CHRNA3 sub-subfamily. Neuronal AChR is composed of two different types of subunits: alpha and beta. CHRNA3/Alpha-3 subunit can be combined to CHRNA5/alpha-5, CHRNB2/beta-2 CHRNB3/beta-3 or CHRNB4/beta-4 to give rise to functional receptors. Forms stoichiometries such as (CHRNA3)2:(CHRNB4)3 or (CHRNA3:CHRNB4)2:CHRNB3. Part of a complex composed of STUB1/CHIP, VCP/p97, CHRNA3, and UBXN2A that modulates the ubiquitination and endoplasmic reticulum-associated degradation (ERAD) of CHRNA3. Within the complex UBXN2A acts as a scaffold protein required for the interaction of CHRNA3 with VCP/p97, this interaction also inhibits CHRNA3 ubiquitination by STUB1/CHIP and subsequently ERAD. Interacts with UBXN2A (via SEP domain), the interaction is required for the interaction of CHRNA3 in the STUB1:VCP:UBXN2A complex. Interacts with RIC3; which is required for proper folding and assembly. Interacts with LYPD6. Post-translationally, ubiquitinated; by STUB1/CHIP and thereafter degraded by the 26S proteosome complex.

It is found in the synaptic cell membrane. Its subcellular location is the cell membrane. It localises to the endoplasmic reticulum. The protein resides in the golgi apparatus. The enzyme catalyses Ca(2+)(in) = Ca(2+)(out). It carries out the reaction K(+)(in) = K(+)(out). It catalyses the reaction Na(+)(in) = Na(+)(out). Its activity is regulated as follows. Activated by a myriad of ligands such as acetylcholine, cytisine, nicotine, choline and epibatidine. The heteropentamer CHRNA3:CHRNB2 activity is blocked by alpha-conotoxins ImI, ImII, PnIA, GID and MII. The heteropentamer CHRNA3:CHRNB4 activity is blocked by the alpha-conotoxin ImI and AuIB. Functionally, component of neuronal acetylcholine receptors (nAChRs) that function as pentameric, ligand-gated cation channels with high calcium permeability among other activities. nAChRs are excitatory neurotrasnmitter receptors formed by a collection of nAChR subunits known to mediate synaptic transmission in the nervous system and the neuromuscular junction. Each nAchR subunit confers differential attributes to channel properties, including activation, deactivation and desensitization kinetics, pH sensitivity, cation permeability, and binding to allosteric modulators. CHRNA3 forms heteropentameric neuronal acetylcholine receptors with CHRNB2 and CHRNB4, with CHRNA5, and CHRNB3 as accesory subunits. CHRNA3:CHRNB4 being predominant in neurons of the autonomic ganglia, it is known as ganglionic nicotinic receptor. CHRNA3:CHRNB4 or CHRNA3:CHRNA5:CHRNB4 play also an important role in the habenulo-interpeduncular tract, modulating the mesolimbic dopamine system and affecting reward circuits and addiction. Hypothalamic CHRNA3:CHRNB4 nAChR activation by nicotine leads to activation of POMC neurons and a decrease in food intake. Also expressed in the urothelium where it modulates reflex bladder activity by increasing intracellular calcium through extracellular influx and basal ATP release. The protein is Neuronal acetylcholine receptor subunit alpha-3 of Homo sapiens (Human).